Reading from the N-terminus, the 207-residue chain is ATP synthase subunit 5, mitochondrial (207 aa).

It belongs to the ATPase delta chain family. F-type ATPases have 2 components, CF(1) - the catalytic core - and CF(0) - the membrane proton channel. CF(1) has five subunits: alpha(3), beta(3), gamma(1), delta(1), epsilon(1). CF(0) has three main subunits: a, b and c.

It is found in the mitochondrion. The protein resides in the mitochondrion inner membrane. In terms of biological role, mitochondrial membrane ATP synthase (F(1)F(0) ATP synthase or Complex V) produces ATP from ADP in the presence of a proton gradient across the membrane which is generated by electron transport complexes of the respiratory chain. F-type ATPases consist of two structural domains, F(1) - containing the extramembraneous catalytic core and F(0) - containing the membrane proton channel, linked together by a central stalk and a peripheral stalk. During catalysis, ATP synthesis in the catalytic domain of F(1) is coupled via a rotary mechanism of the central stalk subunits to proton translocation. Part of the complex F(0) domain and the peripheric stalk, which acts as a stator to hold the catalytic alpha(3)beta(3) subcomplex and subunit a/ATP6 static relative to the rotary elements. This chain is ATP synthase subunit 5, mitochondrial (ATP5), found in Eremothecium gossypii (strain ATCC 10895 / CBS 109.51 / FGSC 9923 / NRRL Y-1056) (Yeast).